A 78-amino-acid chain; its full sequence is Defensin-like protein 173 (78 aa).

Positions 1 to 23 (MAKAPSPLVFPIIFLIIFALVEP) are cleaved as a signal peptide. Cystine bridges form between Cys27–Cys71, Cys34–Cys56, Cys40–Cys65, and Cys44–Cys67.

It belongs to the DEFL family.

It is found in the secreted. The protein is Defensin-like protein 173 (LCR63) of Arabidopsis thaliana (Mouse-ear cress).